The primary structure comprises 401 residues: MDKKKVVLAYSGGLDTSVAIKWLQEKNYDIIALCLDLGEGKDLAFVKEKALSVGAIKSYMIDVQEEFANEYALMAMQAHTLYEGKYPLVSALSRPLIAKKLVEIAEQEGATAVAHGCTGKGNDQVRFEVSIQALNPYLEVIAPVREWKWSREEEIAYAKENNVPIPINLDSPFSIDQNLWGRSNECGILEDPWAAPPEDAYEMTLALEDTPNKPEFVEIGFEAGVPTTLNGTAYPLSELIKTLNALAGKHGVGRIDHVENRLVGIKSREVYECPAAMTLITAHKELEDLTLVKEVAHFKPMIEQKITELIYNGLWFSPLKQALHAFLQETQKNVTGMVRVKLFKGHAIVEGRKSEYSLYDEKLATYTAQDEFNHDAAVGFISLFGLPTKVYSQVNQKKVEA.

9-17 (AYSGGLDTS) serves as a coordination point for ATP. An L-citrulline-binding site is contributed by Tyr86. Gly116 is an ATP binding site. L-aspartate is bound by residues Thr118, Asn122, and Asp123. Asn122 is an L-citrulline binding site. Arg126, Ser174, Ser183, Glu259, and Tyr271 together coordinate L-citrulline.

The protein belongs to the argininosuccinate synthase family. Type 1 subfamily. Homotetramer.

The protein resides in the cytoplasm. The enzyme catalyses L-citrulline + L-aspartate + ATP = 2-(N(omega)-L-arginino)succinate + AMP + diphosphate + H(+). It functions in the pathway amino-acid biosynthesis; L-arginine biosynthesis; L-arginine from L-ornithine and carbamoyl phosphate: step 2/3. The chain is Argininosuccinate synthase from Bacillus thuringiensis subsp. konkukian (strain 97-27).